We begin with the raw amino-acid sequence, 332 residues long: Protein FAM131B (332 aa).

Residues 1-22 (MDSTSSLHGSSLHRPSTEQTRT) form a disordered region. Residue serine 47 is modified to Phosphoserine. A disordered region spans residues 95–114 (PTIQPQHSHEAVRRDTDAYS). A compositionally biased stretch (basic and acidic residues) spans 101 to 111 (HSHEAVRRDTD). Residues serine 114 and serine 117 each carry the phosphoserine modification. A disordered region spans residues 221–332 (LGPAFDDSQP…FDEEEGDANN (112 aa)). 2 stretches are compositionally biased toward basic and acidic residues: residues 272-281 (PVEEEKRPLA) and 288-302 (AGCRDLESLSPREDP). Residues serine 295, serine 297, and serine 313 each carry the phosphoserine modification. Threonine 316 carries the phosphothreonine modification. Serine 317, serine 318, and serine 322 each carry phosphoserine. A compositionally biased stretch (acidic residues) spans 323-332 (FDEEEGDANN).

This sequence belongs to the FAM131 family.

The protein is Protein FAM131B (Fam131b) of Mus musculus (Mouse).